An 852-amino-acid chain; its full sequence is Zinc finger and SCAN domain-containing protein 29 (852 aa).

The region spanning 18-100 (RQRFRRFHYQ…TLVEDLEREP (83 aa)) is the SCAN box domain. Disordered stretches follow at residues 96–182 (LERE…PKSG), 347–400 (ASHS…SAAP), and 502–557 (PNDG…RAPV). K112 participates in a covalent cross-link: Glycyl lysine isopeptide (Lys-Gly) (interchain with G-Cter in SUMO2). S153 is modified (phosphoserine). A Glycyl lysine isopeptide (Lys-Gly) (interchain with G-Cter in SUMO2) cross-link involves residue K180. Polar residues predominate over residues 508–517 (ETASCPVQGT). Positions 528-545 (EADEATEEDSDDDEEDTE) are enriched in acidic residues. S561 is modified (phosphoserine). A Glycyl lysine isopeptide (Lys-Gly) (interchain with G-Cter in SUMO2) cross-link involves residue K576. Residues 603–625 (QGKGNESDCRSGRQWAKTSGEKR) form a disordered region. K652 participates in a covalent cross-link: Glycyl lysine isopeptide (Lys-Gly) (interchain with G-Cter in SUMO2). C2H2-type zinc fingers lie at residues 678–700 (YKCA…RRIH), 706–728 (YKCL…RRIH), 734–756 (YQCG…QRTH), 762–784 (YQCE…RRIH), 790–812 (HVCP…HRTH), and 818–840 (YGCH…GEIH).

It belongs to the krueppel C2H2-type zinc-finger protein family.

It localises to the nucleus. Its function is as follows. May be involved in transcriptional regulation. This chain is Zinc finger and SCAN domain-containing protein 29 (ZSCAN29), found in Homo sapiens (Human).